We begin with the raw amino-acid sequence, 257 residues long: Ubiquinone biosynthesis O-methyltransferase (257 aa).

Positions 43, 77, 98, and 144 each coordinate S-adenosyl-L-methionine.

It belongs to the methyltransferase superfamily. UbiG/COQ3 family.

It catalyses the reaction a 3-demethylubiquinol + S-adenosyl-L-methionine = a ubiquinol + S-adenosyl-L-homocysteine + H(+). The catalysed reaction is a 3-(all-trans-polyprenyl)benzene-1,2-diol + S-adenosyl-L-methionine = a 2-methoxy-6-(all-trans-polyprenyl)phenol + S-adenosyl-L-homocysteine + H(+). It participates in cofactor biosynthesis; ubiquinone biosynthesis. Its function is as follows. O-methyltransferase that catalyzes the 2 O-methylation steps in the ubiquinone biosynthetic pathway. This is Ubiquinone biosynthesis O-methyltransferase from Psychrobacter cryohalolentis (strain ATCC BAA-1226 / DSM 17306 / VKM B-2378 / K5).